Here is a 231-residue protein sequence, read N- to C-terminus: Ribosomal RNA small subunit methyltransferase nep-1 (231 aa).

Residues M161, G188, G193, and 206–211 (ISNYPL) each bind S-adenosyl-L-methionine.

It belongs to the class IV-like SAM-binding methyltransferase superfamily. RNA methyltransferase NEP1 family. Homodimer.

The protein localises to the nucleus. Its subcellular location is the nucleolus. It carries out the reaction a pseudouridine in rRNA + S-adenosyl-L-methionine = an N(1)-methylpseudouridine in rRNA + S-adenosyl-L-homocysteine + H(+). In terms of biological role, S-adenosyl-L-methionine-dependent pseudouridine N(1)-methyltransferase that methylates a pseudouridine in 18S rRNA. Involved the biosynthesis of the hypermodified N1-methyl-N3-(3-amino-3-carboxypropyl) pseudouridine (m1acp3-Psi) conserved in eukaryotic 18S rRNA. Also has an essential role in 40S ribosomal subunit biogenesis independent on its methyltransferase activity, facilitating the incorporation of ribosomal protein S19 during the formation of pre-ribosomes. In Caenorhabditis elegans, this protein is Ribosomal RNA small subunit methyltransferase nep-1.